A 151-amino-acid chain; its full sequence is MILTIKPLKGKECNVQVTEDEKVSMVKELVSERLNIPANQQRLLYKGKALADEYRLSDYSIGPEAKLNLVVRPAGERSGMASSSSAVSGVWQTLSTVLAKHFSPADAAKVHEQLIKDYERSLRQLSLDDIERLAGRLLHPDSEGMDTSYMD.

In terms of domain architecture, Ubiquitin-like spans 1–76 (MILTIKPLKG…LNLVVRPAGE (76 aa)).

Component of the BAT3 complex.

The protein localises to the cytoplasm. It localises to the cytosol. In terms of biological role, component of the BAT3 complex, a multiprotein complex involved in the post-translational delivery of tail-anchored (TA) membrane proteins to the endoplasmic reticulum membrane. TA membrane proteins, also named type II transmembrane proteins, contain a single C-terminal transmembrane region. This Oncorhynchus mykiss (Rainbow trout) protein is Ubiquitin-like protein 4A-B (ubl4ab).